A 72-amino-acid chain; its full sequence is MAKTDLLEVQGTILEVLPNTMFKVQLKNGATILAHVSGKIRMNYIRILPGDTVVVEMSPYDLERGRIVFRHK.

Residues 1–72 (MAKTDLLEVQ…ERGRIVFRHK (72 aa)) enclose the S1-like domain.

Belongs to the IF-1 family. Component of the 30S ribosomal translation pre-initiation complex which assembles on the 30S ribosome in the order IF-2 and IF-3, IF-1 and N-formylmethionyl-tRNA(fMet); mRNA recruitment can occur at any time during PIC assembly.

Its subcellular location is the cytoplasm. One of the essential components for the initiation of protein synthesis. Stabilizes the binding of IF-2 and IF-3 on the 30S subunit to which N-formylmethionyl-tRNA(fMet) subsequently binds. Helps modulate mRNA selection, yielding the 30S pre-initiation complex (PIC). Upon addition of the 50S ribosomal subunit IF-1, IF-2 and IF-3 are released leaving the mature 70S translation initiation complex. The chain is Translation initiation factor IF-1 from Spiroplasma kunkelii.